Here is a 112-residue protein sequence, read N- to C-terminus: Ribosome-binding factor A (112 aa).

It belongs to the RbfA family. Monomer. Binds 30S ribosomal subunits, but not 50S ribosomal subunits or 70S ribosomes.

The protein localises to the cytoplasm. In terms of biological role, one of several proteins that assist in the late maturation steps of the functional core of the 30S ribosomal subunit. Associates with free 30S ribosomal subunits (but not with 30S subunits that are part of 70S ribosomes or polysomes). Required for efficient processing of 16S rRNA. May interact with the 5'-terminal helix region of 16S rRNA. This Ruthia magnifica subsp. Calyptogena magnifica protein is Ribosome-binding factor A.